A 308-amino-acid polypeptide reads, in one-letter code: Protoheme IX farnesyltransferase (308 aa).

9 helical membrane-spanning segments follow: residues Val-20–Ile-40, Pro-53–Phe-73, Asn-102–Thr-122, Leu-124–Leu-144, Thr-149–Ser-169, Ala-170–Thr-190, Leu-227–Met-249, Val-254–Val-276, and Tyr-288–Phe-308.

The protein belongs to the UbiA prenyltransferase family. Protoheme IX farnesyltransferase subfamily.

Its subcellular location is the cell membrane. It carries out the reaction heme b + (2E,6E)-farnesyl diphosphate + H2O = Fe(II)-heme o + diphosphate. Its pathway is porphyrin-containing compound metabolism; heme O biosynthesis; heme O from protoheme: step 1/1. Its function is as follows. Converts heme B (protoheme IX) to heme O by substitution of the vinyl group on carbon 2 of heme B porphyrin ring with a hydroxyethyl farnesyl side group. This is Protoheme IX farnesyltransferase from Mycobacterium leprae (strain TN).